Reading from the N-terminus, the 260-residue chain is Transcription factor MYB4 (260 aa).

2 consecutive HTH myb-type domains span residues A12–L64 and R65–S119. 2 DNA-binding regions (H-T-H motif) span residues W40–L64 and W92–L115.

The protein resides in the nucleus. Functionally, transcription activator involved in the spatiotemporal regulation of flavonoid biosynthesis specifically in the corms of Montbretia. Activates the promoters of enzymes involved in the biosynthesis of the flavonol myricetin and the flavonol-glycoside montbretin A (MbA). MbA is a potent inhibitor of human pancreatic alpha-amylase and is being developed as drug candidate to treat type-2 diabetes. The chain is Transcription factor MYB4 from Crocosmia x crocosmiiflora (Montbretia).